Consider the following 175-residue polypeptide: Putative lipoprotein LppN (175 aa).

Residues 1–20 form the signal peptide; that stretch reads MRLPGRHVLYALSAVTMLAA. The N-palmitoyl cysteine moiety is linked to residue C21. C21 carries S-diacylglycerol cysteine lipidation. The disordered stretch occupies residues 31–56; that stretch reads ASTNMNPTNPPATAETATVSPTPAPQ. A compositionally biased stretch (low complexity) spans 33 to 48; it reads TNMNPTNPPATAETAT. Prevents bacterial uptake by a human macrophage-like cell line regions lie at residues 61–80, 101–120, and 121–140; these read ETWI…PADL, RAPV…DCAA, and GFAP…VAYL.

Its subcellular location is the cell membrane. It localises to the cell surface. Probably involved in bacterial recognition and uptake by its host (human). In Mycobacterium tuberculosis (strain ATCC 25618 / H37Rv), this protein is Putative lipoprotein LppN (lppN).